The primary structure comprises 293 residues: Xylanase inhibitor protein XIP (293 aa).

The N-terminal stretch at 1 to 21 (MALRRLAALLSLAVLLSAGLA) is a signal peptide. Residues 31–293 (GDTVIIWGRN…DKKTGFTAHL (263 aa)) form the GH18 domain. Disulfide bonds link Cys50-Cys92 and Cys189-Cys218.

Belongs to the glycosyl hydrolase 18 family. Xylanase inhibitor subfamily. In terms of tissue distribution, expressed in mature grain.

The protein resides in the secreted. Its function is as follows. Fungal xylanase inhibitor. Possesses competitive inhibiting activity against several fungal endo-1,4-beta-D-xylanases belonging to glycoside hydrolase family 10 (GH10) and family 11 (GH11). May function in plant defense against secreted fungal pathogen xylanases. Is similar to class III chitinases, but does not exhibit chitinase activity. This chain is Xylanase inhibitor protein XIP, found in Oryza sativa subsp. japonica (Rice).